A 301-amino-acid polypeptide reads, in one-letter code: uncharacterized protein (301 aa).

Disordered stretches follow at residues 167–186 (DVHL…PKER) and 225–244 (ASES…EGAS). The span at 170 to 181 (LNSTTPPHTAQV) shows a compositional bias: polar residues. Residues 226 to 237 (SESSLETSSVSS) show a composition bias toward low complexity.

This is an uncharacterized protein from Mus musculus (Mouse).